A 157-amino-acid polypeptide reads, in one-letter code: MKILYPGTFDPLTNGHLDLIERAEKIFGNLVVAVLENTSKTPTFNLERRIIQIKNSLSHLPNIEVISYSGLTVDCANDLKANLILRGLRAMSDFEYELQIAHTNKSLNNDIETIFLSTNTNYSFLSSSLVKEVAKFGGEINHMVPPPVEKDLKEYFK.

A substrate-binding site is contributed by Thr8. ATP contacts are provided by residues 8-9 (TF) and His16. Substrate contacts are provided by Lys40, Thr72, and Arg86. ATP is bound by residues 87-89 (GLR), Glu97, and 122-128 (YSFLSSS).

Belongs to the bacterial CoaD family. In terms of assembly, homohexamer. Requires Mg(2+) as cofactor.

Its subcellular location is the cytoplasm. The catalysed reaction is (R)-4'-phosphopantetheine + ATP + H(+) = 3'-dephospho-CoA + diphosphate. It functions in the pathway cofactor biosynthesis; coenzyme A biosynthesis; CoA from (R)-pantothenate: step 4/5. Its function is as follows. Reversibly transfers an adenylyl group from ATP to 4'-phosphopantetheine, yielding dephospho-CoA (dPCoA) and pyrophosphate. The chain is Phosphopantetheine adenylyltransferase from Prochlorococcus marinus (strain AS9601).